The chain runs to 161 residues: Regulator of ribonuclease activity A (161 aa).

It belongs to the RraA family. As to quaternary structure, homotrimer. Binds to both RNA-binding sites in the C-terminal region of Rne and to RhlB.

The protein resides in the cytoplasm. Functionally, globally modulates RNA abundance by binding to RNase E (Rne) and regulating its endonucleolytic activity. Can modulate Rne action in a substrate-dependent manner by altering the composition of the degradosome. Modulates RNA-binding and helicase activities of the degradosome. The protein is Regulator of ribonuclease activity A of Alteromonas mediterranea (strain DSM 17117 / CIP 110805 / LMG 28347 / Deep ecotype).